Reading from the N-terminus, the 334-residue chain is GTPase Obg (334 aa).

The region spanning 1–159 (MRFVDEVVIK…KEVRLELNLL (159 aa)) is the Obg domain. The 172-residue stretch at 160-331 (ADVALLGLPN…LAKKLNEFLQ (172 aa)) folds into the OBG-type G domain. Residues 166 to 173 (GLPNAGKS), 191 to 195 (FTTMY), 212 to 215 (DIPG), 282 to 285 (NKID), and 312 to 314 (SAA) each bind GTP. Mg(2+)-binding residues include S173 and T193.

Belongs to the TRAFAC class OBG-HflX-like GTPase superfamily. OBG GTPase family. Monomer. Mg(2+) is required as a cofactor.

It is found in the cytoplasm. Functionally, an essential GTPase which binds GTP, GDP and possibly (p)ppGpp with moderate affinity, with high nucleotide exchange rates and a fairly low GTP hydrolysis rate. Plays a role in control of the cell cycle, stress response, ribosome biogenesis and in those bacteria that undergo differentiation, in morphogenesis control. In Francisella tularensis subsp. tularensis (strain FSC 198), this protein is GTPase Obg.